A 437-amino-acid chain; its full sequence is UDP-N-acetylmuramate--L-alanine ligase (437 aa).

Residue 108–114 coordinates ATP; that stretch reads GAHGKTS.

Belongs to the MurCDEF family.

Its subcellular location is the cytoplasm. The enzyme catalyses UDP-N-acetyl-alpha-D-muramate + L-alanine + ATP = UDP-N-acetyl-alpha-D-muramoyl-L-alanine + ADP + phosphate + H(+). The protein operates within cell wall biogenesis; peptidoglycan biosynthesis. Its function is as follows. Cell wall formation. The chain is UDP-N-acetylmuramate--L-alanine ligase from Staphylococcus aureus (strain JH9).